The chain runs to 307 residues: Epimerase family protein ML0860 (307 aa).

This sequence belongs to the NAD(P)-dependent epimerase/dehydratase family. SDR39U1 subfamily.

In Mycobacterium leprae (strain TN), this protein is Epimerase family protein ML0860.